The following is a 1262-amino-acid chain: Ras-specific guanine nucleotide-releasing factor 1 (1262 aa).

The PH 1 domain occupies 22 to 130 (DGTRKGYLSK…WVAAIARASY (109 aa)). Phosphoserine; by PLK2 is present on serine 71. Residues 208–233 (KKIKKVQSFLRGWLCRRKWKNIIQDY) enclose the IQ domain. The DH domain maps to 244–430 (KRNQVVFSML…EELSRIMHDE (187 aa)). One can recognise a PH 2 domain in the interval 460 to 588 (TFVRQGSLMQ…WTSDIIQCVD (129 aa)). 2 positions are modified to phosphoserine; by PLK2: serine 581 and serine 617. An N-terminal Ras-GEF domain is found at 635–749 (KVLQIRYASV…RRRKLSLNIP (115 aa)). The disordered stretch occupies residues 714-738 (DAPKSPRASRKFSSPPPLAIGTSSP). At serine 745 the chain carries Phosphoserine. Position 766 is a phosphoserine; by PLK2 (serine 766). The tract at residues 800–854 (EEIDVPATIPEKPGELSASRKHSSDVLKEESEDDQNHSDEDNTEVSPVKSPPTPK) is disordered. A compositionally biased stretch (basic and acidic residues) spans 821–839 (HSSDVLKEESEDDQNHSDE). The 233-residue stretch at 1027 to 1259 (PALEIAEQLT…YESSLLIEPK (233 aa)) folds into the Ras-GEF domain.

Homooligomer and heterooligomer with RASGRF2. Interacts with USP8, thereby regulating its stability. In terms of processing, phosphorylated by PLK2, leading to ubiquitination and degradation by the proteasome. Ubiquitinated and degraded following phosphorylation by PLK2. Post-translationally, phosphorylated by SRC and LCK. Phosphorylation by LCK increases its capacity to stimulate the GDP/GTP exchange on Ras, whereas its phosphorylation by SRC seems not to have an effect on stimulation activity. In terms of tissue distribution, brain.

Functionally, promotes the exchange of Ras-bound GDP by GTP. The chain is Ras-specific guanine nucleotide-releasing factor 1 (Rasgrf1) from Mus musculus (Mouse).